The primary structure comprises 134 residues: uncharacterized protein (134 aa).

The first 16 residues, 1-16 (MAKAVALLLAAIAASA), serve as a signal peptide directing secretion.

This is an uncharacterized protein from Oryza sativa subsp. indica (Rice).